We begin with the raw amino-acid sequence, 460 residues long: Putative arginine/ornithine antiporter (460 aa).

At 1-4 (MEKK) the chain is on the cytoplasmic side. Residues 5–25 (LGLSALTALVLSSMLGAGVFS) traverse the membrane as a helical segment. Residues 26–38 (LPQNMAAVASPAA) are Periplasmic-facing. Residues 39–59 (LLIGWGITGAGILLLAFAMLI) traverse the membrane as a helical segment. Topologically, residues 60-92 (LTRIRPELDGGIFTYAREGFGELIGFCSAWGYW) are cytoplasmic. Residues 93 to 113 (LCAVIANVSYLVIVFSALSFF) traverse the membrane as a helical segment. The Periplasmic segment spans residues 114–125 (TDTPELRLFGDG). A helical transmembrane segment spans residues 126 to 146 (NTWQSIVGASALLWIVHFLIL). Residues 147-157 (RGVQTAASINL) lie on the Cytoplasmic side of the membrane. Residues 158 to 178 (VATLAKLLPLGLFVVLAMMMF) traverse the membrane as a helical segment. The Periplasmic portion of the chain corresponds to 179–201 (KLDTFKLDFTGLALGVPVWEQVK). Residues 202-222 (NTMLITLWVFIGVEGAVVVSA) traverse the membrane as a helical segment. Residues 223–235 (RARNKRDVGKATL) lie on the Cytoplasmic side of the membrane. The chain crosses the membrane as a helical span at residues 236–256 (LAVLSALGVYLLVTLLSLGVV). At 257–282 (ARPELAEIRNPSMAGLMVEMMGPWGE) the chain is on the periplasmic side. A helical membrane pass occupies residues 283–303 (IIIAAGLIVSVCGAYLSWTIM). Residues 304 to 331 (AAEVPFLAATHKAFPRIFARQNAQAAPS) lie on the Cytoplasmic side of the membrane. A helical transmembrane segment spans residues 332–352 (ASLWLTNICVQICLVLIWLTG). Residues 353 to 357 (SDYNT) lie on the Periplasmic side of the membrane. Residues 358 to 378 (LLTIASEMILVPYFLVGAFLL) form a helical membrane-spanning segment. The Cytoplasmic segment spans residues 379–384 (KIATRP). 2 helical membrane passes run 385–405 (LHKAVGVGACIYGLWLLYASG) and 406–426 (PMHLLLSVVLYAPGLLVFLYA). The Cytoplasmic portion of the chain corresponds to 427-439 (RKTHTHDNVLNRQ). Residues 440–460 (EMVLIGMLLIASVPATWMLVG) traverse the membrane as a helical segment.

The protein belongs to the amino acid-polyamine-organocation (APC) superfamily. Basic amino acid/polyamine antiporter (APA) (TC 2.A.3.2) family.

The protein localises to the cell inner membrane. It catalyses the reaction L-ornithine(in) + L-arginine(out) = L-ornithine(out) + L-arginine(in). Catalyzes electroneutral exchange between arginine and ornithine to allow high-efficiency energy conversion in the arginine deiminase pathway. This Escherichia coli O6:H1 (strain CFT073 / ATCC 700928 / UPEC) protein is Putative arginine/ornithine antiporter (ydgI).